Reading from the N-terminus, the 418-residue chain is Pyruvate decarboxylase 1 (418 aa).

His-59 provides a ligand contact to substrate. The segment at 337–418 (DSWFNCQKLK…IFLINNGGYT (82 aa)) is thiamine pyrophosphate binding. Asp-387, Asn-414, and Gly-416 together coordinate Mg(2+).

The protein belongs to the TPP enzyme family. As to quaternary structure, homotetramer. A metal cation serves as cofactor. Thiamine diphosphate is required as a cofactor. As to expression, leaves.

The catalysed reaction is a 2-oxocarboxylate + H(+) = an aldehyde + CO2. The protein is Pyruvate decarboxylase 1 (PDC1) of Nicotiana tabacum (Common tobacco).